The sequence spans 173 residues: Regulatory protein RecX (173 aa).

It belongs to the RecX family.

It is found in the cytoplasm. Its function is as follows. Modulates RecA activity. This Mycobacterium avium (strain 104) protein is Regulatory protein RecX.